We begin with the raw amino-acid sequence, 887 residues long: MGEAEKFHYIYSCDLDINVQLKIGSLEGKREQKSYKAVLEDPMLKFSGLYQETCSDLYVTCQVFAEGKPLALPVRTSYKAFSTRWNWNEWLKLPVKYPDLPRNAQVALTIWDVYGPGKAVPVGGTTVSLFGKYGMFRQGMHDLKVWPNVEADGSEPTKTPGRTSSTLSEDQMSRLAKLTKAHRQGHMVKVDWLDRLTFREIEMINESEKRSSNFMYLMVEFRCVKCDDKEYGIVYYEKDGDESSPILTGFEIVKVPDPQMSMENLVESKHHKLARSLRSGPSDHGLKPNAATRDQLNIIVSYPPTKQLTYEEQDLVWKFRYYLTNQEKALTKFLKCVNWDLPQEAKQALELLGKWKPMDVEDSLELLSSHYANPTVRRYAVARLRQADDEDLLMYLLQLVQALKYENFDDIKNGLEPTKKESQGSVSESVSNSGIGSAEIDSSQIITSPLPPVSSPPPASKTKESSDGESLEQDLCTFLISRACKNSTLANYLYWYVIVECEGQDTQQRDPKTHEMYLNVMRRFSQALLKGDKSVRVMRSLLAAQQTFVDRLVHLMKAVQRESGNRKKKNERLQALLGDNEKMNLSDVELIPLPLEPQVKIRGIIPETATLFKSALMPAQLFFKTEDGGKYPVIFKHGDDLRQDQLILQIISLMDKLLRKENLDLKLTPYKVLATSTKHGFMQFIQSVPVAEVLDTEGSIQNFFRKYAPSENGPNGISAEVMDTYVKSCAGYCVITYILGVGDRHLDNLLLTKTGKLFHIDFGYILGRDPKPLPPPMKLNKEMVEGMGGTQSEQYQEFRKQCYTAFLHLRRYSNLILNLFSLMVDANIPDIALEPDKTVKKVQDKFRLDLSDEEAVHYMQSLIDESVHALFAAVVEQIHKFAQYWRK.

A C2 PI3K-type domain is found at 35–184 (YKAVLEDPML…LAKLTKAHRQ (150 aa)). Residues 150–170 (EADGSEPTKTPGRTSSTLSED) form a disordered region. Positions 156-170 (PTKTPGRTSSTLSED) are enriched in polar residues. At Thr-163 the chain carries Phosphothreonine; by AMPK. At Ser-165 the chain carries Phosphoserine; by AMPK. 3 positions are modified to phosphoserine: Ser-244, Ser-261, and Ser-282. The region spanning 282–520 (SDHGLKPNAA…PKTHEMYLNV (239 aa)) is the PIK helical domain. 2 disordered regions span residues 416-435 (EPTK…NSGI) and 446-468 (ITSP…SSDG). Low complexity predominate over residues 423–435 (QGSVSESVSNSGI). Positions 449–459 (PLPPVSSPPPA) are enriched in pro residues. The PI3K/PI4K catalytic domain maps to 605–871 (IPETATLFKS…LIDESVHALF (267 aa)). The segment at 611–617 (LFKSALM) is G-loop. Residues 740-748 (GVGDRHLDN) form a catalytic loop region. The segment at 759–780 (HIDFGYILGRDPKPLPPPMKLN) is activation loop.

It belongs to the PI3/PI4-kinase family. Component of the PI3K (PI3KC3/PI3K-III/class III phosphatidylinositol 3-kinase) complex the core of which is composed of the catalytic subunit PIK3C3, the regulatory subunit PIK3R4 and BECN1 associating with additional regulatory/auxiliary subunits to form alternative complex forms. Alternative complex forms containing a fourth regulatory subunit in a mutually exclusive manner are: the PI3K complex I (PI3KC3-C1) containing ATG14, and the PI3K complex II (PI3KC3-C2) containing UVRAG. PI3KC3-C1 displays a V-shaped architecture with PIK3R4 serving as a bridge between PIK3C3 and the ATG14:BECN1 subcomplex. Both, PI3KC3-C1 and PI3KC3-C2, can associate with further regulatory subunits such as RUBCN, SH3GLB1/Bif-1 and AMBRA1. PI3KC3-C1 probably associates with PIK3CB. Interacts with RAB7A in the presence of PIK3R4. Interacts with AMBRA1. Interacts with BECN1P1/BECN2. Interacts with SLAMF1. May be a component of a complex composed of RAB5A (in GDP-bound form), DYN2 and PIK3C3. Interacts with NCKAP1L. Interacts with ATG14; this interaction is increased in the absence of TMEM39A. Interacts with STEEP1; the interaction is STING1-dependent and required for trafficking of STING1 from the endoplasmic reticulum. Interacts with YWHAG. Interacts with ARMC3. Mn(2+) serves as cofactor. Post-translationally, ubiquitinated via 'Lys-29'- and 'Lys-48'-linked ubiquitination by UBE3C, promoting its degradation. Deubiquitination by ZRANB1/TRABID promotes its stabilization, leading to autophagosome maturation.

The protein localises to the midbody. It localises to the late endosome. Its subcellular location is the cytoplasmic vesicle. The protein resides in the autophagosome. It carries out the reaction a 1,2-diacyl-sn-glycero-3-phospho-(1D-myo-inositol) + ATP = a 1,2-diacyl-sn-glycero-3-phospho-(1D-myo-inositol-3-phosphate) + ADP + H(+). Its function is as follows. Catalytic subunit of the PI3K complex that mediates formation of phosphatidylinositol 3-phosphate; different complex forms are believed to play a role in multiple membrane trafficking pathways: PI3KC3-C1 is involved in initiation of autophagosomes and PI3KC3-C2 in maturation of autophagosomes and endocytosis. As part of PI3KC3-C1, promotes endoplasmic reticulum membrane curvature formation prior to vesicle budding. Involved in regulation of degradative endocytic trafficking and required for the abscission step in cytokinesis, probably in the context of PI3KC3-C2. Involved in the transport of lysosomal enzyme precursors to lysosomes. Required for transport from early to late endosomes. This is Phosphatidylinositol 3-kinase catalytic subunit type 3 from Sus scrofa (Pig).